The chain runs to 302 residues: Zinc import ATP-binding protein ZnuC (302 aa).

Residues 13–228 enclose the ABC transporter domain; sequence VSLANAGVRR…PEYLKLFGRR (216 aa). 45–52 contacts ATP; that stretch reads GPNGSGKS.

This sequence belongs to the ABC transporter superfamily. Zinc importer (TC 3.A.1.15.5) family. The complex is composed of two ATP-binding proteins (ZnuC), two transmembrane proteins (ZnuB) and a solute-binding protein (ZnuA).

It localises to the cell inner membrane. It catalyses the reaction Zn(2+)(out) + ATP(in) + H2O(in) = Zn(2+)(in) + ADP(in) + phosphate(in) + H(+)(in). Its function is as follows. Part of the ABC transporter complex ZnuABC involved in zinc import. Responsible for energy coupling to the transport system. In Rhizobium meliloti (strain 1021) (Ensifer meliloti), this protein is Zinc import ATP-binding protein ZnuC.